Consider the following 78-residue polypeptide: Translation initiation factor IF-1, chloroplastic (78 aa).

The S1-like domain maps to 1 to 73 (MASNRELIEM…TKGRIIYRLR (73 aa)).

It belongs to the IF-1 family. Component of the 30S ribosomal translation pre-initiation complex which assembles on the 30S ribosome in the order IF-2 and IF-3, IF-1 and N-formylmethionyl-tRNA(fMet); mRNA recruitment can occur at any time during PIC assembly.

It is found in the plastid. The protein resides in the chloroplast. Functionally, one of the essential components for the initiation of protein synthesis. Stabilizes the binding of IF-2 and IF-3 on the 30S subunit to which N-formylmethionyl-tRNA(fMet) subsequently binds. Helps modulate mRNA selection, yielding the 30S pre-initiation complex (PIC). Upon addition of the 50S ribosomal subunit IF-1, IF-2 and IF-3 are released leaving the mature 70S translation initiation complex. The protein is Translation initiation factor IF-1, chloroplastic of Ostreococcus tauri.